We begin with the raw amino-acid sequence, 237 residues long: NAD(P)H-quinone oxidoreductase subunit K, chloroplastic (237 aa).

Positions 55, 56, 120, and 151 each coordinate [4Fe-4S] cluster.

The protein belongs to the complex I 20 kDa subunit family. As to quaternary structure, NDH is composed of at least 16 different subunits, 5 of which are encoded in the nucleus. It depends on [4Fe-4S] cluster as a cofactor.

It localises to the plastid. The protein localises to the chloroplast thylakoid membrane. It catalyses the reaction a plastoquinone + NADH + (n+1) H(+)(in) = a plastoquinol + NAD(+) + n H(+)(out). The enzyme catalyses a plastoquinone + NADPH + (n+1) H(+)(in) = a plastoquinol + NADP(+) + n H(+)(out). In terms of biological role, NDH shuttles electrons from NAD(P)H:plastoquinone, via FMN and iron-sulfur (Fe-S) centers, to quinones in the photosynthetic chain and possibly in a chloroplast respiratory chain. The immediate electron acceptor for the enzyme in this species is believed to be plastoquinone. Couples the redox reaction to proton translocation, and thus conserves the redox energy in a proton gradient. The polypeptide is NAD(P)H-quinone oxidoreductase subunit K, chloroplastic (Nephroselmis olivacea (Green alga)).